A 78-amino-acid chain; its full sequence is Conotoxin ArMKLT2-0313 (78 aa).

The signal sequence occupies residues 1 to 22 (MKLTCVLIIAVLCLTVCQLITA). A propeptide spanning residues 23–47 (DYLRDKQKYRSVRLRDGMLNFKGSR) is cleaved from the precursor. Position 48 is a pyrrolidone carboxylic acid (glutamine 48). 3 cysteine pairs are disulfide-bonded: cysteine 49-cysteine 62, cysteine 56-cysteine 67, and cysteine 61-cysteine 75.

It belongs to the conotoxin O1 superfamily. Expressed by the venom duct.

Its subcellular location is the secreted. The chain is Conotoxin ArMKLT2-0313 from Conus arenatus (Sand-dusted cone).